We begin with the raw amino-acid sequence, 265 residues long: Pre-protein VI (265 aa).

Residues 1–33 (MEDINFSSLAPRHGTRPYMGTWNEIGTSQLNGG) constitute a propeptide that is removed on maturation. Residues 34 to 54 (AFNWNSIWSGLKNFGSTIKTY) are amphipathic alpha-helix essential for membrane lytic activity. The segment at 36–53 (NWNSIWSGLKNFGSTIKT) is involved in endosomal membrane lysis. Residues 48–74 (GSTIKTYGTKAWNSQTGQMLRDKLKDQ) are interaction with hexon protein. A Nuclear export signal motif is present at residues 67–76 (LRDKLKDQNF). Residues 123–155 (LETVPGSVPTKGEKRPRPDAEETLVTHTTEPPS) form a disordered region. Basic and acidic residues predominate over residues 133–142 (KGEKRPRPDA). The Nuclear localization signal motif lies at 136–140 (KRPRP). A Phosphothreonine; by host modification is found at T148. The PPXY motif motif lies at 153–156 (PPSY). A Nuclear export signal motif is present at residues 246–257 (STLNSIVGLGVK). Residues 248 to 254 (LNSIVGL) form an interaction with hexon protein region. A binds to importin alpha/beta, involved in hexon nuclear import region spans residues 255 to 265 (GVKSLKRRRCY). The Nuclear localization signal motif lies at 260–263 (KRRR).

The protein belongs to the adenoviridae protein VI family. Interacts with hexon protein; this interaction allows nuclear import of hexon trimers and possibly pre-capsid assembly. Interacts (via C-terminal NLS) with importin alpha/beta. As to quaternary structure, interacts (via PPxY motif) with host NEDD4 ubiquitine ligase; this interaction might play a role in virus intracellular transport during entry. Part of a complex composed of the core-capsid bridging protein, the endosome lysis protein VI and the hexon-linking protein VIII; these interactions bridge the virus core to the capsid. Interacts with peripentonal hexons; this interaction stabilizes the capsid by gluing two peripentonal hexons together and joining them with an adjacent group-of-nine hexon. In terms of assembly, heterodimer with the viral protease; disulfide-linked. Interacts with the viral protease. Post-translationally, ubiquitinated by Nedd4 following partial capsid disassembly; which might play a role in intracellular virus movement during entry. Contains the major nuclear import and export signals. Proteolytically removed during virion maturation. The processing of the C-terminus turns the precursor into a mature viral structural protein and abrogates its ability to promote hexon import and act as a potential chaperone protein.

It is found in the host nucleus. Its subcellular location is the host cytoplasm. The protein resides in the virion. Functionally, during virus assembly, promotes hexon trimers nuclear import through nuclear pore complexes via an importin alpha/beta-dependent mechanism. By analogy to herpesviruses capsid assembly, might act as a chaperone to promote the formation of the icosahedral capsid. In terms of biological role, structural component of the virion that provides increased stability to the particle shell through its interaction with the core-capsid bridging protein and the hexon-linking protein VIII. Fibers shedding during virus entry into host cell allows the endosome lysis protein to be exposed as a membrane-lytic peptide. Exhibits pH-independent membrane fragmentation activity and probably mediates viral rapid escape from host endosome via organellar membrane lysis. It is not clear if it then remains partially associated with the capsid and involved in the intracellular microtubule-dependent transport of capsid to the nucleus, or if it is lost during endosomal penetration. Its function is as follows. Cofactor that activates the viral protease. Binds to viral protease in a 1:1 ratio. This is Pre-protein VI from Human adenovirus A serotype 12 (HAdV-12).